The primary structure comprises 245 residues: 1-(5-phosphoribosyl)-5-[(5-phosphoribosylamino)methylideneamino] imidazole-4-carboxamide isomerase (245 aa).

Asp-11 acts as the Proton acceptor in catalysis. Asp-132 functions as the Proton donor in the catalytic mechanism.

Belongs to the HisA/HisF family.

The protein localises to the cytoplasm. It catalyses the reaction 1-(5-phospho-beta-D-ribosyl)-5-[(5-phospho-beta-D-ribosylamino)methylideneamino]imidazole-4-carboxamide = 5-[(5-phospho-1-deoxy-D-ribulos-1-ylimino)methylamino]-1-(5-phospho-beta-D-ribosyl)imidazole-4-carboxamide. The protein operates within amino-acid biosynthesis; L-histidine biosynthesis; L-histidine from 5-phospho-alpha-D-ribose 1-diphosphate: step 4/9. The polypeptide is 1-(5-phosphoribosyl)-5-[(5-phosphoribosylamino)methylideneamino] imidazole-4-carboxamide isomerase (Geobacillus thermodenitrificans (strain NG80-2)).